Reading from the N-terminus, the 194-residue chain is CASP-like protein 4C1 (194 aa).

Topologically, residues 1–35 (MRSPHAFRNGESPTLRDHTHFHSTVTAQKLRRFNS) are cytoplasmic. Residues 36-56 (LILLLRLASFSFSLASAVFML) traverse the membrane as a helical segment. Residues 57 to 74 (TNSRGSASPHWYDFDAFR) are Extracellular-facing. Residues 75-95 (FVFVANAIVALYSVFEMGTCV) traverse the membrane as a helical segment. Topologically, residues 96-114 (WEFSRETTLWPEAFQVWFD) are cytoplasmic. Residues 115-135 (FGHDQVFSYLLLSAGSAAAAL) form a helical membrane-spanning segment. The Extracellular segment spans residues 136-157 (ARTMRGGDTCTANKAFCLQSDV). The chain crosses the membrane as a helical span at residues 158-178 (AIGLGFAAFLFLAFSSCFSGF). The Cytoplasmic portion of the chain corresponds to 179–194 (RVACFLITGSRFHLYS).

Belongs to the Casparian strip membrane proteins (CASP) family. As to quaternary structure, homodimer and heterodimers.

The protein resides in the cell membrane. This chain is CASP-like protein 4C1, found in Arabidopsis thaliana (Mouse-ear cress).